Reading from the N-terminus, the 371-residue chain is ADP-ribosylarginine hydrolase Tri1 (371 aa).

Residues 1–61 form an N-terminal extension region; that stretch reads MIDLRSPNAL…LQSRACTLTP (61 aa). The interval 70 to 362 is ADP-ribosyl hydrolase domain; sequence GALLGLAIGD…LFDRAPQVDE (293 aa). Mg(2+) is bound by residues Thr112, Asp113, Asp114, Asp157, and Asp313.

Belongs to the ADP-ribosylglycohydrolase family. It depends on Mg(2+) as a cofactor.

It carries out the reaction N(omega)-(ADP-D-ribosyl)-L-arginyl-[protein] + H2O = ADP-D-ribose + L-arginyl-[protein]. Immunity component of an interbacterial competition system (also called effector-immunity systems). Expression in E.coli neutralizes the toxic effects of non-cognate S.proteamaculans effector protein Tre1 (Tre1-Sp); cannot be co-purified with Tre1-Sp from E.coli, suggesting they do not form a stable complex. Probably acts as an arginine mono-ADP-ribosylhydrolase, mediating the removal of mono-ADP-ribose attached to arginine residues on proteins. Probably de-ADP-ribosylates FtsZ and possibly other proteins; the ability to hydrolyze ADP-ribosyl moieties is not essential for neutralization of its cognate toxin, strongly suggesting its N-terminal extension occludes the active site of cognate toxin Tre1. The protein is ADP-ribosylarginine hydrolase Tri1 of Pseudomonas putida (strain GB-1).